The following is a 351-amino-acid chain: Photosystem II D2 protein (351 aa).

A helical membrane pass occupies residues 39–59 (CAFLALGGWLTGTTFVTSWYT). His-116 serves as a coordination point for chlorophyll a. Residues 123-139 (GFMLRQFEIARLVGIRP) traverse the membrane as a helical segment. Positions 128 and 141 each coordinate pheophytin a. The chain crosses the membrane as a helical span at residues 151–164 (VFVSVFLMYPLGQS). Residue His-196 participates in chlorophyll a binding. Residues 206-226 (GALLCAIHGATVENTLFEDGD) traverse the membrane as a helical segment. The a plastoquinone site is built by His-213 and Phe-260. Position 213 (His-213) interacts with Fe cation. His-267 provides a ligand contact to Fe cation. The chain crosses the membrane as a helical span at residues 277-293 (GLWMSAVGIVGLALNLR).

This sequence belongs to the reaction center PufL/M/PsbA/D family. In terms of assembly, PSII is composed of 1 copy each of membrane proteins PsbA, PsbB, PsbC, PsbD, PsbE, PsbF, PsbH, PsbI, PsbJ, PsbK, PsbL, PsbM, PsbT, PsbX, PsbY, PsbZ, Psb30/Ycf12, peripheral proteins PsbO, CyanoQ (PsbQ), PsbU, PsbV and a large number of cofactors. It forms dimeric complexes. It depends on The D1/D2 heterodimer binds P680, chlorophylls that are the primary electron donor of PSII, and subsequent electron acceptors. It shares a non-heme iron and each subunit binds pheophytin, quinone, additional chlorophylls, carotenoids and lipids. There is also a Cl(-1) ion associated with D1 and D2, which is required for oxygen evolution. The PSII complex binds additional chlorophylls, carotenoids and specific lipids. as a cofactor.

The protein resides in the cellular thylakoid membrane. The enzyme catalyses 2 a plastoquinone + 4 hnu + 2 H2O = 2 a plastoquinol + O2. Photosystem II (PSII) is a light-driven water:plastoquinone oxidoreductase that uses light energy to abstract electrons from H(2)O, generating O(2) and a proton gradient subsequently used for ATP formation. It consists of a core antenna complex that captures photons, and an electron transfer chain that converts photonic excitation into a charge separation. The D1/D2 (PsbA/PsbD) reaction center heterodimer binds P680, the primary electron donor of PSII as well as several subsequent electron acceptors. D2 is needed for assembly of a stable PSII complex. In Nostoc punctiforme (strain ATCC 29133 / PCC 73102), this protein is Photosystem II D2 protein.